The following is a 181-amino-acid chain: ATP-dependent protease subunit HslV (181 aa).

T5 is an active-site residue. A161, C164, and T167 together coordinate Na(+).

It belongs to the peptidase T1B family. HslV subfamily. In terms of assembly, a double ring-shaped homohexamer of HslV is capped on each side by a ring-shaped HslU homohexamer. The assembly of the HslU/HslV complex is dependent on binding of ATP.

The protein resides in the cytoplasm. It carries out the reaction ATP-dependent cleavage of peptide bonds with broad specificity.. Its activity is regulated as follows. Allosterically activated by HslU binding. Its function is as follows. Protease subunit of a proteasome-like degradation complex believed to be a general protein degrading machinery. This is ATP-dependent protease subunit HslV from Sulfurimonas denitrificans (strain ATCC 33889 / DSM 1251) (Thiomicrospira denitrificans (strain ATCC 33889 / DSM 1251)).